The sequence spans 96 residues: Small ribosomal subunit protein uS19 (96 aa).

The interval 1–30 is disordered; it reads MARSIKKGPFADKHLTKKVEDANKGNKKSV. Basic and acidic residues predominate over residues 9–24; sequence PFADKHLTKKVEDANK.

Belongs to the universal ribosomal protein uS19 family.

Functionally, protein S19 forms a complex with S13 that binds strongly to the 16S ribosomal RNA. The polypeptide is Small ribosomal subunit protein uS19 (Anaeromyxobacter sp. (strain Fw109-5)).